We begin with the raw amino-acid sequence, 258 residues long: Type III pantothenate kinase (258 aa).

6–13 provides a ligand contact to ATP; sequence DVGNTNTV. Substrate is bound by residues tyrosine 100 and 107–110; that span reads GADR. Catalysis depends on aspartate 109, which acts as the Proton acceptor. Position 129 (aspartate 129) interacts with K(+). Threonine 132 is a binding site for ATP. Threonine 184 contacts substrate.

The protein belongs to the type III pantothenate kinase family. Homodimer. NH4(+) is required as a cofactor. It depends on K(+) as a cofactor.

The protein resides in the cytoplasm. The enzyme catalyses (R)-pantothenate + ATP = (R)-4'-phosphopantothenate + ADP + H(+). It participates in cofactor biosynthesis; coenzyme A biosynthesis; CoA from (R)-pantothenate: step 1/5. Functionally, catalyzes the phosphorylation of pantothenate (Pan), the first step in CoA biosynthesis. The chain is Type III pantothenate kinase from Bacillus licheniformis (strain ATCC 14580 / DSM 13 / JCM 2505 / CCUG 7422 / NBRC 12200 / NCIMB 9375 / NCTC 10341 / NRRL NRS-1264 / Gibson 46).